Reading from the N-terminus, the 404-residue chain is Transcription factor sem-2 (404 aa).

Positions 93–161 (IKRPMNAFMV…CHMQEYPDYK (69 aa)) form a DNA-binding region, HMG box. Disordered regions lie at residues 158-218 (PDYK…QFQN) and 321-359 (HTSP…NSAG). The segment covering 177–199 (QQPAQPQAPQQQQAPPRGASPQA) has biased composition (low complexity). Composition is skewed to polar residues over residues 207-218 (TDQQSETQQFQN) and 347-359 (ASEQ…NSAG).

The protein localises to the nucleus. In terms of biological role, probable transcription factor required for embryogenesis, vulval development and cell fate specification of the postembryonic mesoderm (also known as the M lineage). Specifically, required for the specification of sex myoblast cells and their development into the muscles that are necessary for egg-laying. In addition, may be involved in RME GABAergic motor neuron progenitor cell fate specification. This chain is Transcription factor sem-2, found in Caenorhabditis elegans.